Reading from the N-terminus, the 118-residue chain is Autophagy-related protein 8 (118 aa).

Glycine 116 is lipidated: Phosphatidylethanolamine amidated glycine. A propeptide spans 117–118 (removed in mature form); the sequence is EA.

Belongs to the ATG8 family. Conjugation to phosphatidylethanolamine (PE) leads to homodimerization. Interacts with ATG1, ATG3, ATG4, ATG7 and ATG12. Post-translationally, the C-terminal Glu-117 and Ala-118 residues of ATG8 are removed by ATG4 to expose Gly-116 at the C-terminus. This Gly-116 forms then a thioester bond with the 'Cys-550' of ATG7 (E1-like activating enzyme) before being transferred to the 'Cys-244' of ATG3 (the specific E2 conjugating enzyme), in order to be finally amidated with phosphatidylethanolamine. This lipid modification anchors ATG8 to membranes and can be reversed by ATG4, releasing soluble ATG8.

The protein localises to the cytoplasmic vesicle. The protein resides in the cvt vesicle membrane. It localises to the autophagosome membrane. Its subcellular location is the vacuole membrane. Ubiquitin-like modifier involved in cytoplasm to vacuole transport (Cvt) vesicles and autophagosome formation. With ATG4, mediates the delivery of the vesicles and autophagosomes to the vacuole via the microtubule cytoskeleton. Required for selective autophagic degradation of the nucleus (nucleophagy) as well as for mitophagy which contributes to regulate mitochondrial quantity and quality by eliminating the mitochondria to a basal level to fulfill cellular energy requirements and preventing excess ROS production. Also participates in membrane fusion events that take place in the early secretory pathway. Also involved in endoplasmic reticulum-specific autophagic process and is essential for the survival of cells subjected to severe ER stress. The ATG8-PE conjugate mediates tethering between adjacent membranes and stimulates membrane hemifusion, leading to expansion of the autophagosomal membrane during autophagy. Moreover not only conjugation, but also subsequent ATG8-PE deconjugation is an important step required to facilitate multiple events during macroautophagy, and especially for efficient autophagosome biogenesis, the assembly of ATG9-containing tubulovesicular clusters into phagophores/autophagosomes, and for the disassembly of PAS-associated ATG components. Autophagy is required for proper vegetative growth, asexual/sexual reproduction, and full virulence. Autophagy is particularly involved in the biosynthesis of deoxynivalenol (DON), an important virulence determinant. This chain is Autophagy-related protein 8, found in Gibberella zeae (strain ATCC MYA-4620 / CBS 123657 / FGSC 9075 / NRRL 31084 / PH-1) (Wheat head blight fungus).